The following is a 456-amino-acid chain: Protein odr-4 homolog (456 aa).

A compositionally biased stretch (low complexity) spans 374–401 (IESSKNNNNNNNNNNNNNNNNNNNNSKL). Positions 374–403 (IESSKNNNNNNNNNNNNNNNNNNNNSKLSN) are disordered. The chain crosses the membrane as a helical span at residues 436–456 (YLIIIISVLVLMVAFYFKFFV).

This sequence belongs to the ODR-4 family.

It localises to the membrane. Its function is as follows. May play a role in the trafficking of a subset of G-protein coupled receptors. The polypeptide is Protein odr-4 homolog (Dictyostelium discoideum (Social amoeba)).